Consider the following 101-residue polypeptide: uncharacterized protein (101 aa).

This is an uncharacterized protein from Saccharomyces cerevisiae (strain ATCC 204508 / S288c) (Baker's yeast).